We begin with the raw amino-acid sequence, 335 residues long: MRTPATVVAGVDLGDAVFAAAVRAGVARVEQLMDTELRQADEVMSDSLLHLFNAGGKRFRPLFTVLSAQIGPQPDAAAVTVAGAVIEMIHLATLYHDDVMDEAQVRRGAPSANAQWGNNVAILAGDYLLATASRLVARLGPEAVRIIADTFAQLVTGQMRETRGTSENVDSIEQYLKVVQEKTGSLIGAAGRLGGMFSGATDEQVERLSRLGGVVGTAFQIADDIIDIDSESDESGKLPGTDVREGVHTLPMLYALRESGPDCARLRALLNGPVDDDAEVREALTLLRASPGMARAKDVLAQYAAQARHELALLPDVPGRRALAALVDYTVSRHG.

Isopentenyl diphosphate-binding residues include Lys-57, Arg-60, and His-90. Mg(2+)-binding residues include Asp-97 and Asp-101. A DDXXD motif motif is present at residues 97-101; that stretch reads DDVMD. Arg-107 contributes to the isopentenyl diphosphate binding site. The DDXXD motif signature appears at 223 to 227; that stretch reads DDIID.

Belongs to the FPP/GGPP synthase family. Requires Mg(2+) as cofactor.

The enzyme catalyses isopentenyl diphosphate + (2E)-geranyl diphosphate = (2E,6E)-farnesyl diphosphate + diphosphate. It carries out the reaction isopentenyl diphosphate + (2E,6E)-farnesyl diphosphate = (2E,6E,10E)-geranylgeranyl diphosphate + diphosphate. It catalyses the reaction 5 isopentenyl diphosphate + (2E,6E,10E)-geranylgeranyl diphosphate = all-trans-nonaprenyl diphosphate + 5 diphosphate. It participates in isoprenoid biosynthesis; farnesyl diphosphate biosynthesis; farnesyl diphosphate from geranyl diphosphate and isopentenyl diphosphate. The protein operates within isoprenoid biosynthesis; geranylgeranyl diphosphate biosynthesis; geranylgeranyl diphosphate from farnesyl diphosphate and isopentenyl diphosphate: step 1/1. In terms of biological role, catalyzes the sequential condensations of isopentenyl pyrophosphate (IPP) with geranyl diphosphate (GPP) to yield (2E,6E)-farnesyl diphosphate (E,E-FPP), with E,E-FPP to yield geranylgeranyl diphosphate (GGPP) and with GGPP to yield nonaprenyl diphosphate. May also have weak activity with dimethylallyl diphosphate (DMAPP). This Mycobacterium tuberculosis (strain ATCC 25618 / H37Rv) protein is Nonaprenyl diphosphate synthase.